A 345-amino-acid chain; its full sequence is MDANKQKSLDLAMKQIDKAFGKGALMRLGDKEIMPIESISTGSLGLDLALGIGGIPQGRVVEIYGPESSGKTTLALQITAECQKAGGVCAFIDAEHALDVGYAKNLGVDVDNLLVSQPDYGEQALDIVETIARSGAIDLIVIDSVAALTPKSEIEGEMSDQNVGVQARLMSKALRKLTGILHKMNCTVIFINQIRMKIGMMGYGSPETTTGGNALKFYASVRIDVRRIASLKQGESQIGNRVKAKVIKNKVAPPFRQAEFDIMFGEGISKEGELVDYGVKLDIIDKSGAWFSYGETKLGQGRENVKAKFMEDKVLAHEIEEKIKAAMGLGDLMTMDSLDIEDVDL.

65–72 (GPESSGKT) is an ATP binding site.

Belongs to the RecA family.

It localises to the cytoplasm. Can catalyze the hydrolysis of ATP in the presence of single-stranded DNA, the ATP-dependent uptake of single-stranded DNA by duplex DNA, and the ATP-dependent hybridization of homologous single-stranded DNAs. It interacts with LexA causing its activation and leading to its autocatalytic cleavage. This chain is Protein RecA, found in Sulfurimonas denitrificans (strain ATCC 33889 / DSM 1251) (Thiomicrospira denitrificans (strain ATCC 33889 / DSM 1251)).